Consider the following 111-residue polypeptide: Large ribosomal subunit protein uL22 (111 aa).

This sequence belongs to the universal ribosomal protein uL22 family. As to quaternary structure, part of the 50S ribosomal subunit.

Its function is as follows. This protein binds specifically to 23S rRNA; its binding is stimulated by other ribosomal proteins, e.g. L4, L17, and L20. It is important during the early stages of 50S assembly. It makes multiple contacts with different domains of the 23S rRNA in the assembled 50S subunit and ribosome. In terms of biological role, the globular domain of the protein is located near the polypeptide exit tunnel on the outside of the subunit, while an extended beta-hairpin is found that lines the wall of the exit tunnel in the center of the 70S ribosome. This chain is Large ribosomal subunit protein uL22, found in Protochlamydia amoebophila (strain UWE25).